The chain runs to 134 residues: Acyl carrier protein, chloroplastic (134 aa).

Residues 1–51 constitute a chloroplast transit peptide; the sequence is MSTTFCSSVSMQATSLAATTRISFQKPGLVSRTNLSFNLRRSIPTRLSVSC. A Carrier domain is found at 55–130; the sequence is PETVEKVSKI…EAAELIEELV (76 aa). Serine 90 carries the O-(pantetheine 4'-phosphoryl)serine modification.

This sequence belongs to the acyl carrier protein (ACP) family. Post-translationally, 4'-phosphopantetheine is transferred from CoA to a specific serine of apo-ACP by acpS. This modification is essential for activity because fatty acids are bound in thioester linkage to the sulfhydryl of the prosthetic group. As to expression, seed.

It localises to the plastid. Its subcellular location is the chloroplast. Its pathway is lipid metabolism; fatty acid biosynthesis. In terms of biological role, carrier of the growing fatty acid chain in fatty acid biosynthesis. The polypeptide is Acyl carrier protein, chloroplastic (ACL1.A2) (Brassica napus (Rape)).